The following is a 213-amino-acid chain: Isopentenyl-diphosphate Delta-isomerase (213 aa).

The segment covering 1–10 (MRDSMSEADR) has biased composition (basic and acidic residues). Residues 1–34 (MRDSMSEADRSSPGSGKTDREDETAENATQDVIA) form a disordered region. Residues H51, H58, and H95 each coordinate Mn(2+). Residues 56–193 (VRHRAFTCLL…RQLRLCPWFE (138 aa)) enclose the Nudix hydrolase domain. Mg(2+) is bound at residue E113. Residues E142 and E144 each contribute to the Mn(2+) site. E144 is a catalytic residue.

Belongs to the IPP isomerase type 1 family. It depends on Mg(2+) as a cofactor. Requires Mn(2+) as cofactor.

It localises to the cytoplasm. It carries out the reaction isopentenyl diphosphate = dimethylallyl diphosphate. It functions in the pathway isoprenoid biosynthesis; dimethylallyl diphosphate biosynthesis; dimethylallyl diphosphate from isopentenyl diphosphate: step 1/1. Its function is as follows. Catalyzes the 1,3-allylic rearrangement of the homoallylic substrate isopentenyl (IPP) to its highly electrophilic allylic isomer, dimethylallyl diphosphate (DMAPP). The polypeptide is Isopentenyl-diphosphate Delta-isomerase (Halobacterium salinarum (strain ATCC 700922 / JCM 11081 / NRC-1) (Halobacterium halobium)).